A 321-amino-acid polypeptide reads, in one-letter code: Lipoyl synthase (321 aa).

[4Fe-4S] cluster-binding residues include Cys-68, Cys-73, Cys-79, Cys-94, Cys-98, Cys-101, and Ser-308. The Radical SAM core domain occupies 80-297 (FNHGTATFMI…KEQALAMGFT (218 aa)).

This sequence belongs to the radical SAM superfamily. Lipoyl synthase family. [4Fe-4S] cluster serves as cofactor.

It localises to the cytoplasm. It carries out the reaction [[Fe-S] cluster scaffold protein carrying a second [4Fe-4S](2+) cluster] + N(6)-octanoyl-L-lysyl-[protein] + 2 oxidized [2Fe-2S]-[ferredoxin] + 2 S-adenosyl-L-methionine + 4 H(+) = [[Fe-S] cluster scaffold protein] + N(6)-[(R)-dihydrolipoyl]-L-lysyl-[protein] + 4 Fe(3+) + 2 hydrogen sulfide + 2 5'-deoxyadenosine + 2 L-methionine + 2 reduced [2Fe-2S]-[ferredoxin]. It participates in protein modification; protein lipoylation via endogenous pathway; protein N(6)-(lipoyl)lysine from octanoyl-[acyl-carrier-protein]: step 2/2. Functionally, catalyzes the radical-mediated insertion of two sulfur atoms into the C-6 and C-8 positions of the octanoyl moiety bound to the lipoyl domains of lipoate-dependent enzymes, thereby converting the octanoylated domains into lipoylated derivatives. This Proteus mirabilis (strain HI4320) protein is Lipoyl synthase.